A 436-amino-acid polypeptide reads, in one-letter code: MGQVLPLVTRQGDRIAIVSGLRTPFARQATAFHGIPAVDLGKMVVGELLARTEIPAEVIEQLVFGQVVQMPEAPNIAREIVLGTGMNVHTDAYSVSRACATSFQAVANVAESLMAGTIRAGIAGGADSSSVLPIGVSKKLARVLVDVNKARTMSQRLKLFSRLRLRDLMPVPPAVAEYSTGLRMGDTAEQMAKTYGITREQQDALAHRSHQRAAQAWSEGKLKEEVMTAFIPPYKQPLVEDNNIRGNSSLADYAKLRPAFDRKHGTVTAANSTPLTDGAAAVILMTESRAKELGLVPLGYLRSYAFTAIDVWQDMLLGPAWSTPLALERAGLTMGDLTLIDMHEAFAAQTLANIQLLGSERFARDVLGRAHATGEVDESKFNVLGGSIAYGHPFAATGARMITQTLYELRRRGGGFGLVTACAAGGLGAAMVLEAE.

Cys-99 acts as the Acyl-thioester intermediate in catalysis. Residues His-392 and Cys-422 each act as proton acceptor in the active site.

The protein belongs to the thiolase-like superfamily. Thiolase family. Heterotetramer of two alpha chains (FadJ) and two beta chains (FadI).

Its subcellular location is the cytoplasm. The catalysed reaction is an acyl-CoA + acetyl-CoA = a 3-oxoacyl-CoA + CoA. The protein operates within lipid metabolism; fatty acid beta-oxidation. In terms of biological role, catalyzes the final step of fatty acid oxidation in which acetyl-CoA is released and the CoA ester of a fatty acid two carbons shorter is formed. This chain is 3-ketoacyl-CoA thiolase, found in Escherichia coli O81 (strain ED1a).